The following is a 555-amino-acid chain: Protein NRT1/ PTR FAMILY 2.1 (555 aa).

The next 12 membrane-spanning stretches (helical) occupy residues threonine 32–isoleucine 52, isoleucine 68–phenylalanine 88, isoleucine 91–isoleucine 111, isoleucine 127–valine 147, phenylalanine 175–valine 195, leucine 205–lysine 225, valine 324–methionine 344, valine 369–isoleucine 389, leucine 401–valine 421, valine 437–alanine 457, serine 476–isoleucine 496, and tryptophan 517–phenylalanine 537.

The protein belongs to the major facilitator superfamily. Proton-dependent oligopeptide transporter (POT/PTR) (TC 2.A.17) family. As to expression, expressed in roots.

It localises to the membrane. In terms of biological role, transporter involved in a passive nitrate efflux. The protein is Protein NRT1/ PTR FAMILY 2.1 (NPF2.1) of Arabidopsis thaliana (Mouse-ear cress).